The sequence spans 1104 residues: Transposon Ty4-P Gag-Pol polyprotein (1104 aa).

Residues 48-112 (VKQYQRNLNR…VEKIQLLETN (65 aa)) adopt a coiled-coil conformation. Residues 381 to 501 (QQQLKSSAKE…KTKMVLSRKY (121 aa)) are ty4 protease. Aspartate 414 acts as the For protease activity; shared with dimeric partner in catalysis. Positions 539 to 599 (AIKPTSSPGF…EPNEFWCQTC (61 aa)) are integrase-type zinc finger-like. Residues 619–786 (TDHEPGSSWC…LPLKAISRQP (168 aa)) form the Integrase catalytic domain. Mg(2+) is bound by residues aspartate 630 and aspartate 695.

The protease is a homodimer, whose active site consists of two apposed aspartic acid residues. Post-translationally, proteolytically processed into capsid protein (CA), Ty4 protease (PR), integrase (IN) and reverse transcriptase/ribonuclease H (RT) proteins. Initially, virus-like particles (VLPs) are composed of the structural unprocessed proteins Gag and Gag-Pol, and also contain the host initiator methionine tRNA (tRNA(i)-Met) which serves as a primer for minus-strand DNA synthesis, and a dimer of genomic Ty RNA. Processing of the polyproteins occurs within the particle and proceeds by an ordered pathway, called maturation. First, the protease (PR) is released by autocatalytic cleavage of the Gag-Pol polyprotein, and this cleavage is a prerequisite for subsequent processing at the remaining sites to release the mature structural and catalytic proteins. Maturation takes place prior to the RT reaction and is required to produce transposition-competent VLPs.

It is found in the cytoplasm. It localises to the nucleus. It catalyses the reaction DNA(n) + a 2'-deoxyribonucleoside 5'-triphosphate = DNA(n+1) + diphosphate. The enzyme catalyses Endonucleolytic cleavage to 5'-phosphomonoester.. Capsid protein (CA) is the structural component of the virus-like particle (VLP), forming the shell that encapsulates the retrotransposons dimeric RNA genome. In terms of biological role, the aspartyl protease (PR) mediates the proteolytic cleavages of the Gag and Gag-Pol polyproteins after assembly of the VLP. Its function is as follows. Reverse transcriptase/ribonuclease H (RT) is a multifunctional enzyme that catalyzes the conversion of the retro-elements RNA genome into dsDNA within the VLP. The enzyme displays a DNA polymerase activity that can copy either DNA or RNA templates, and a ribonuclease H (RNase H) activity that cleaves the RNA strand of RNA-DNA heteroduplexes during plus-strand synthesis and hydrolyzes RNA primers. The conversion leads to a linear dsDNA copy of the retrotransposon that includes long terminal repeats (LTRs) at both ends. Functionally, integrase (IN) targets the VLP to the nucleus, where a subparticle preintegration complex (PIC) containing at least integrase and the newly synthesized dsDNA copy of the retrotransposon must transit the nuclear membrane. Once in the nucleus, integrase performs the integration of the dsDNA into the host genome. The polypeptide is Transposon Ty4-P Gag-Pol polyprotein (TY4B-P) (Saccharomyces cerevisiae (strain ATCC 204508 / S288c) (Baker's yeast)).